A 311-amino-acid chain; its full sequence is Vomeronasal type-1 receptor 3 (311 aa).

At M1–D5 the chain is on the extracellular side. Residues F6–L26 traverse the membrane as a helical segment. Residues L27 to T51 are Cytoplasmic-facing. Residues I52 to L72 traverse the membrane as a helical segment. Over K73 to R92 the chain is Extracellular. Residues A93 to S113 form a helical membrane-spanning segment. Topologically, residues E114–S130 are cytoplasmic. A helical transmembrane segment spans residues F131–V151. At T152 to S187 the chain is on the extracellular side. A glycan (N-linked (GlcNAc...) asparagine) is linked at N159. Residues S188–L208 traverse the membrane as a helical segment. Residues H209–R232 lie on the Cytoplasmic side of the membrane. Residues V233–R249 form a helical membrane-spanning segment. Topologically, residues S250–W264 are extracellular. The helical transmembrane segment at W265–L285 threads the bilayer. Topologically, residues M286–R311 are cytoplasmic.

It belongs to the G-protein coupled receptor 1 family.

It is found in the cell membrane. In terms of biological role, putative pheromone receptor. The protein is Vomeronasal type-1 receptor 3 (VN1R3) of Homo sapiens (Human).